The primary structure comprises 424 residues: Gamma-glutamyl phosphate reductase (424 aa).

This sequence belongs to the gamma-glutamyl phosphate reductase family.

It is found in the cytoplasm. The enzyme catalyses L-glutamate 5-semialdehyde + phosphate + NADP(+) = L-glutamyl 5-phosphate + NADPH + H(+). The protein operates within amino-acid biosynthesis; L-proline biosynthesis; L-glutamate 5-semialdehyde from L-glutamate: step 2/2. In terms of biological role, catalyzes the NADPH-dependent reduction of L-glutamate 5-phosphate into L-glutamate 5-semialdehyde and phosphate. The product spontaneously undergoes cyclization to form 1-pyrroline-5-carboxylate. The chain is Gamma-glutamyl phosphate reductase from Dehalococcoides mccartyi (strain ATCC BAA-2100 / JCM 16839 / KCTC 5957 / BAV1).